A 159-amino-acid chain; its full sequence is MSMNRQEISDLCVKSLEGRMVGTEAQNIENGNAFYRYFFTNFPDLRVYFKGAEKYTADDVKKSERFDKQGQRILLACHLLANVYTNEEVFKGYVRETINRHRIYKMDPALWMAFFTVFTGYLESVGCLNDQQKAAWMALGKEFNAESQTHLKNSNLPHV.

Residues Met-1–Lys-152 enclose the Globin domain. Position 101 (His-101) interacts with heme.

It belongs to the globin family. In terms of assembly, homodimer. Expressed mainly in a subset of neuronal cells and in head muscular tissue.

The protein resides in the cytoplasm. In terms of biological role, may be a globin and may play a role in oxygen transport. This chain is Globin-like protein (glb-1), found in Caenorhabditis elegans.